The primary structure comprises 376 residues: Peroxisomal membrane protein PEX27 (376 aa).

Homooligomer. Interacts with PEX25 and PEX34.

The protein localises to the peroxisome membrane. Its function is as follows. Required for regulation of peroxisome size and number. Also promotes peroxisome division and biogenesis. This Saccharomyces cerevisiae (strain ATCC 204508 / S288c) (Baker's yeast) protein is Peroxisomal membrane protein PEX27 (PEX27).